The sequence spans 156 residues: Small ribosomal subunit protein uS7 (156 aa).

This sequence belongs to the universal ribosomal protein uS7 family. In terms of assembly, part of the 30S ribosomal subunit. Contacts proteins S9 and S11.

Its function is as follows. One of the primary rRNA binding proteins, it binds directly to 16S rRNA where it nucleates assembly of the head domain of the 30S subunit. Is located at the subunit interface close to the decoding center, probably blocks exit of the E-site tRNA. In Marinobacter nauticus (strain ATCC 700491 / DSM 11845 / VT8) (Marinobacter aquaeolei), this protein is Small ribosomal subunit protein uS7.